A 319-amino-acid chain; its full sequence is UDP-3-O-acylglucosamine N-acyltransferase (319 aa).

The active-site Proton acceptor is the H230.

The protein belongs to the transferase hexapeptide repeat family. LpxD subfamily. As to quaternary structure, homotrimer.

The enzyme catalyses a UDP-3-O-[(3R)-3-hydroxyacyl]-alpha-D-glucosamine + a (3R)-hydroxyacyl-[ACP] = a UDP-2-N,3-O-bis[(3R)-3-hydroxyacyl]-alpha-D-glucosamine + holo-[ACP] + H(+). Its pathway is bacterial outer membrane biogenesis; LPS lipid A biosynthesis. In terms of biological role, catalyzes the N-acylation of UDP-3-O-acylglucosamine using 3-hydroxyacyl-ACP as the acyl donor. Is involved in the biosynthesis of lipid A, a phosphorylated glycolipid that anchors the lipopolysaccharide to the outer membrane of the cell. The chain is UDP-3-O-acylglucosamine N-acyltransferase from Campylobacter lari (strain RM2100 / D67 / ATCC BAA-1060).